A 529-amino-acid polypeptide reads, in one-letter code: Chaperonin GroEL, chloroplastic (529 aa).

ATP contacts are provided by residues 29–32, 86–90, Gly414, 480–482, and Asp496; these read TLGP, DGTTT, and DAA.

This sequence belongs to the chaperonin (HSP60) family. Forms a cylinder of 14 subunits composed of two heptameric rings stacked back-to-back. Interacts with the co-chaperonin GroES.

It is found in the plastid. The protein resides in the chloroplast. The enzyme catalyses ATP + H2O + a folded polypeptide = ADP + phosphate + an unfolded polypeptide.. Together with its co-chaperonin GroES, plays an essential role in assisting protein folding. The GroEL-GroES system forms a nano-cage that allows encapsulation of the non-native substrate proteins and provides a physical environment optimized to promote and accelerate protein folding. The sequence is that of Chaperonin GroEL, chloroplastic from Guillardia theta (Cryptophyte).